The sequence spans 435 residues: Adenylosuccinate synthetase (435 aa).

GTP-binding positions include 22–28 and 50–52; these read GDEGKGK and GHT. The active-site Proton acceptor is the Asp23. Positions 23 and 50 each coordinate Mg(2+). IMP is bound by residues 23–26, 48–51, Thr140, Arg154, Gln235, Thr250, and Arg314; these read DEGK and NAGH. His51 serves as the catalytic Proton donor. 310–316 lines the substrate pocket; it reads ATTGRKR. GTP-binding positions include Arg316, 342 to 344, and 424 to 426; these read KLD and SVG.

This sequence belongs to the adenylosuccinate synthetase family. Homodimer. The cofactor is Mg(2+).

It is found in the cytoplasm. The enzyme catalyses IMP + L-aspartate + GTP = N(6)-(1,2-dicarboxyethyl)-AMP + GDP + phosphate + 2 H(+). The protein operates within purine metabolism; AMP biosynthesis via de novo pathway; AMP from IMP: step 1/2. In terms of biological role, plays an important role in the de novo pathway of purine nucleotide biosynthesis. Catalyzes the first committed step in the biosynthesis of AMP from IMP. The chain is Adenylosuccinate synthetase from Chlorobaculum parvum (strain DSM 263 / NCIMB 8327) (Chlorobium vibrioforme subsp. thiosulfatophilum).